The chain runs to 462 residues: Argininosuccinate lyase (462 aa).

The protein belongs to the lyase 1 family. Argininosuccinate lyase subfamily.

The protein localises to the cytoplasm. The enzyme catalyses 2-(N(omega)-L-arginino)succinate = fumarate + L-arginine. The protein operates within amino-acid biosynthesis; L-arginine biosynthesis; L-arginine from L-ornithine and carbamoyl phosphate: step 3/3. The chain is Argininosuccinate lyase from Chloroflexus aggregans (strain MD-66 / DSM 9485).